Reading from the N-terminus, the 1023-residue chain is Phosphoenolpyruvate carboxylase (1023 aa).

Catalysis depends on residues H199 and K669.

It belongs to the PEPCase type 1 family. Requires Mg(2+) as cofactor.

It catalyses the reaction oxaloacetate + phosphate = phosphoenolpyruvate + hydrogencarbonate. Forms oxaloacetate, a four-carbon dicarboxylic acid source for the tricarboxylic acid cycle. The sequence is that of Phosphoenolpyruvate carboxylase from Trichormus variabilis (strain ATCC 29413 / PCC 7937) (Anabaena variabilis).